We begin with the raw amino-acid sequence, 458 residues long: Adenylosuccinate synthetase (458 aa).

Residues 17 to 23 (GDEGKGK) and 45 to 47 (GHT) each bind GTP. Asp-18 functions as the Proton acceptor in the catalytic mechanism. Mg(2+)-binding residues include Asp-18 and Gly-45. IMP-binding positions include 18–21 (DEGK), 43–46 (NAGH), Thr-137, Arg-151, Gln-247, Thr-262, and Arg-330. The Proton donor role is filled by His-46. 326–332 (VTTGRSR) is a binding site for substrate. Residues Arg-332, 358 to 360 (KLD), and 440 to 442 (STS) each bind GTP.

Belongs to the adenylosuccinate synthetase family. As to quaternary structure, homodimer. It depends on Mg(2+) as a cofactor.

The protein resides in the cytoplasm. It catalyses the reaction IMP + L-aspartate + GTP = N(6)-(1,2-dicarboxyethyl)-AMP + GDP + phosphate + 2 H(+). Its pathway is purine metabolism; AMP biosynthesis via de novo pathway; AMP from IMP: step 1/2. Plays an important role in the de novo pathway of purine nucleotide biosynthesis. Catalyzes the first committed step in the biosynthesis of AMP from IMP. The sequence is that of Adenylosuccinate synthetase from Verminephrobacter eiseniae (strain EF01-2).